The primary structure comprises 92 residues: PqqA binding protein (92 aa).

This sequence belongs to the PqqD family. Monomer. Interacts with PqqE.

It functions in the pathway cofactor biosynthesis; pyrroloquinoline quinone biosynthesis. In terms of biological role, functions as a PqqA binding protein and presents PqqA to PqqE, in the pyrroloquinoline quinone (PQQ) biosynthetic pathway. This is PqqA binding protein from Xanthomonas axonopodis pv. citri (strain 306).